Reading from the N-terminus, the 252-residue chain is Floral homeotic protein AGAMOUS (252 aa).

Residues 1–20 (MAYQSELGGDSSPLRKSGRG) are disordered. An MADS-box domain is found at 19–73 (RGKIEIKRIENTTNRQVTFCKRRNGLLKKAYELSVLCDAEVALIVFSSRGRLYEY). A coiled-coil region spans residues 99–166 (AEINAQYYQQ…KKNELLFSEI (68 aa)). Residues 103 to 193 (AQYYQQESAK…RAKIAENERN (91 aa)) form the K-box domain.

As to quaternary structure, homodimer, capable of binding to CArG-box sequences. Forms a heterodimer via the K-box domain with either SEPALATTA1/AGL2, SEPALATTA2/AGL4, SEPALLATA3/AGL9 or AGL6. Heterodimerization also seen with some other Agamous-like MADS-box proteins. Interacts with AGL15 and AGL16. Component of a complex made of FLOR1, VSP1 and AGAMOUS (AG). Binds directly with FLR1. Detected early in the floral meristem but mostly expressed in stamen and carpel primordia.

The protein resides in the nucleus. Probable transcription factor involved in the control of organ identity during the early development of flowers. Is required for normal development of stamens and carpels in the wild-type flower. Plays a role in maintaining the determinacy of the floral meristem. Acts as C class cadastral protein by repressing the A class floral homeotic genes like APETALA1. Forms a heterodimer via the K-box domain with either SEPALATTA1/AGL2, SEPALATTA2/AGL4, SEPALLATA3/AGL9 or AGL6 that could be involved in genes regulation during floral meristem development. Controls AHL21/GIK, a multifunctional chromatin modifier in reproductive organ patterning and differentiation. Induces microsporogenesis through the activation of SPL/NZZ. This Arabidopsis thaliana (Mouse-ear cress) protein is Floral homeotic protein AGAMOUS (AG).